The sequence spans 642 residues: Assimilatory sulfite reductase (ferredoxin), chloroplastic (642 aa).

A chloroplast-targeting transit peptide spans 1-61; that stretch reads MSSTFRAPAG…SSSSSSPIQA (61 aa). The disordered stretch occupies residues 46-74; that stretch reads PVPPSASSSSSSPIQAVSTPAKPETATKR. Residues Cys503, Cys509, Cys549, and Cys553 each coordinate [4Fe-4S] cluster. Cys553 is a binding site for siroheme.

Belongs to the nitrite and sulfite reductase 4Fe-4S domain family. As to quaternary structure, monomer. Interacts with ferredoxin. Siroheme serves as cofactor. It depends on [4Fe-4S] cluster as a cofactor. In terms of processing, phosphorylated; this phosphorylation reduces DNA-binding. Present in leaves and roots.

Its subcellular location is the plastid. It localises to the chloroplast stroma. The protein localises to the chloroplast nucleoid. It is found in the plastid stroma. The enzyme catalyses hydrogen sulfide + 6 oxidized [2Fe-2S]-[ferredoxin] + 3 H2O = sulfite + 6 reduced [2Fe-2S]-[ferredoxin] + 7 H(+). Functionally, essential protein with sulfite reductase activity required in assimilatory sulfate reduction pathway during both primary and secondary metabolism and thus involved in development and growth. Its function is as follows. DNA-binding protein that binds to both double-stranded and single-stranded DNA without significant sequence specificity to reversibly repress the transcriptional activity of chloroplast nucleoids by promoting DNA compaction and possibly regulate DNA replication. This Arabidopsis thaliana (Mouse-ear cress) protein is Assimilatory sulfite reductase (ferredoxin), chloroplastic (SIR).